A 252-amino-acid polypeptide reads, in one-letter code: Membrane protein insertase YidC (252 aa).

Residues 1 to 20 (MRKKFGIIVALIALTTLLSG) form the signal peptide. A lipid anchor (N-palmitoyl cysteine) is attached at Cys21. A lipid anchor (S-diacylglycerol cysteine) is attached at Cys21. The next 5 helical transmembrane spans lie at 59–79 (YGLAIIIVTLFVRLLLMPLNV), 129–149 (LAGCLPILVQMPIFVAMYHAI), 160–180 (FLWFQLGSPDYILPILTGLFT), 206–226 (IMLYVMPIMIGVMAFFFPAAL), and 228–248 (LYWVTGNIFMVFQTLLINKPM).

It belongs to the OXA1/ALB3/YidC family. Type 2 subfamily.

It localises to the cell membrane. Functionally, required for the insertion and/or proper folding and/or complex formation of integral membrane proteins into the membrane. Involved in integration of membrane proteins that insert both dependently and independently of the Sec translocase complex, as well as at least some lipoproteins. This chain is Membrane protein insertase YidC, found in Oceanobacillus iheyensis (strain DSM 14371 / CIP 107618 / JCM 11309 / KCTC 3954 / HTE831).